A 206-amino-acid chain; its full sequence is Probable GTP-binding protein EngB (206 aa).

Positions 23 to 202 (HTAEVAFVGR…WGALLDTFGK (180 aa)) constitute an EngB-type G domain. Residues 31–38 (GRSNVGKS), 58–62 (GRTRT), 83–86 (DLPG), 150–153 (TKVD), and 181–183 (FSS) contribute to the GTP site. Mg(2+)-binding residues include Ser-38 and Thr-60.

It belongs to the TRAFAC class TrmE-Era-EngA-EngB-Septin-like GTPase superfamily. EngB GTPase family. Mg(2+) serves as cofactor.

Its function is as follows. Necessary for normal cell division and for the maintenance of normal septation. In Myxococcus xanthus (strain DK1622), this protein is Probable GTP-binding protein EngB.